We begin with the raw amino-acid sequence, 811 residues long: LPS-assembly protein LptD (811 aa).

The signal sequence occupies residues 1-17; the sequence is MTEPNRARKTRQRTAFA. A disordered region spans residues 1–22; it reads MTEPNRARKTRQRTAFAAPDQR.

Belongs to the LptD family. In terms of assembly, component of the lipopolysaccharide transport and assembly complex. Interacts with LptE and LptA.

It localises to the cell outer membrane. Its function is as follows. Together with LptE, is involved in the assembly of lipopolysaccharide (LPS) at the surface of the outer membrane. The sequence is that of LPS-assembly protein LptD from Ralstonia nicotianae (strain ATCC BAA-1114 / GMI1000) (Ralstonia solanacearum).